The sequence spans 432 residues: Adenylosuccinate synthetase (432 aa).

GTP-binding positions include 13 to 19 (GDEGKGK) and 41 to 43 (GHT). Residue D14 is the Proton acceptor of the active site. Mg(2+) is bound by residues D14 and G41. IMP is bound by residues 14–17 (DEGK), 39–42 (NAGH), T130, R144, Q225, T240, and R304. H42 functions as the Proton donor in the catalytic mechanism. 300–306 (AVTGRPR) contributes to the substrate binding site. GTP-binding positions include R306, 332–334 (KLD), and 415–417 (STG).

It belongs to the adenylosuccinate synthetase family. As to quaternary structure, homodimer. Mg(2+) serves as cofactor.

It localises to the cytoplasm. It catalyses the reaction IMP + L-aspartate + GTP = N(6)-(1,2-dicarboxyethyl)-AMP + GDP + phosphate + 2 H(+). It functions in the pathway purine metabolism; AMP biosynthesis via de novo pathway; AMP from IMP: step 1/2. Functionally, plays an important role in the de novo pathway of purine nucleotide biosynthesis. Catalyzes the first committed step in the biosynthesis of AMP from IMP. The polypeptide is Adenylosuccinate synthetase (Actinobacillus pleuropneumoniae serotype 7 (strain AP76)).